The sequence spans 237 residues: Sugar fermentation stimulation protein homolog (237 aa).

Belongs to the SfsA family.

The sequence is that of Sugar fermentation stimulation protein homolog from Actinobacillus pleuropneumoniae serotype 5b (strain L20).